We begin with the raw amino-acid sequence, 333 residues long: L-lactate dehydrogenase A chain (333 aa).

NAD(+) contacts are provided by residues glycine 30 to lysine 58 and arginine 100. Substrate-binding residues include arginine 107, asparagine 139, and arginine 170. NAD(+) is bound at residue asparagine 139. The active-site Proton acceptor is the histidine 194. Threonine 249 is a substrate binding site.

This sequence belongs to the LDH/MDH superfamily. LDH family. Homotetramer.

The protein localises to the cytoplasm. It carries out the reaction (S)-lactate + NAD(+) = pyruvate + NADH + H(+). Its pathway is fermentation; pyruvate fermentation to lactate; (S)-lactate from pyruvate: step 1/1. In terms of biological role, interconverts simultaneously and stereospecifically pyruvate and lactate with concomitant interconversion of NADH and NAD(+). This is L-lactate dehydrogenase A chain (ldha) from Danio rerio (Zebrafish).